The sequence spans 218 residues: Superoxide dismutase [Mn] 2, mitochondrial (218 aa).

A mitochondrion-targeting transit peptide spans 1 to 24 (MLQSTARTASKLVQPVAGVLAVRS). Mn(2+) is bound by residues His50, His98, Asp179, and His183.

The protein belongs to the iron/manganese superoxide dismutase family. Homotetramer. It depends on Mn(2+) as a cofactor. Expressed in pharynx and rectum. Upon thermal stress, expressed in vulva, body wall muscles and hypodermis.

Its subcellular location is the mitochondrion. It catalyses the reaction 2 superoxide + 2 H(+) = H2O2 + O2. Destroys superoxide anion radicals which are normally produced within the cells and which are toxic to biological systems. This chain is Superoxide dismutase [Mn] 2, mitochondrial (sod-3), found in Caenorhabditis elegans.